A 146-amino-acid polypeptide reads, in one-letter code: 1,4-dihydroxy-2-naphthoyl-CoA hydrolase (146 aa).

The active site involves Asp-19.

This sequence belongs to the 4-hydroxybenzoyl-CoA thioesterase family. DHNA-CoA hydrolase subfamily.

The catalysed reaction is 1,4-dihydroxy-2-naphthoyl-CoA + H2O = 1,4-dihydroxy-2-naphthoate + CoA + H(+). Its pathway is cofactor biosynthesis; phylloquinone biosynthesis. The protein operates within quinol/quinone metabolism; 1,4-dihydroxy-2-naphthoate biosynthesis; 1,4-dihydroxy-2-naphthoate from chorismate: step 7/7. Catalyzes the hydrolysis of 1,4-dihydroxy-2-naphthoyl-CoA (DHNA-CoA) to 1,4-dihydroxy-2-naphthoate (DHNA), a reaction involved in phylloquinone (vitamin K1) biosynthesis. The sequence is that of 1,4-dihydroxy-2-naphthoyl-CoA hydrolase from Thermosynechococcus vestitus (strain NIES-2133 / IAM M-273 / BP-1).